Consider the following 51-residue polypeptide: Large ribosomal subunit protein eL39 (51 aa).

This sequence belongs to the eukaryotic ribosomal protein eL39 family.

The chain is Large ribosomal subunit protein eL39 (rpl39e) from Thermoplasma acidophilum (strain ATCC 25905 / DSM 1728 / JCM 9062 / NBRC 15155 / AMRC-C165).